The chain runs to 389 residues: tRNA pseudouridine synthase Pus10 (389 aa).

Residue Asp-213 is the Nucleophile of the active site. Residues Tyr-278 and Tyr-350 each contribute to the substrate site.

This sequence belongs to the pseudouridine synthase Pus10 family.

It catalyses the reaction uridine(54) in tRNA = pseudouridine(54) in tRNA. The enzyme catalyses uridine(55) in tRNA = pseudouridine(55) in tRNA. Responsible for synthesis of pseudouridine from uracil-54 and uracil-55 in the psi GC loop of transfer RNAs. The sequence is that of tRNA pseudouridine synthase Pus10 from Thermoplasma acidophilum (strain ATCC 25905 / DSM 1728 / JCM 9062 / NBRC 15155 / AMRC-C165).